We begin with the raw amino-acid sequence, 194 residues long: Probable GTP-binding protein EngB (194 aa).

The 173-residue stretch at 22 to 194 (KIPQIAIVGK…LRIFEEVIEK (173 aa)) folds into the EngB-type G domain. GTP contacts are provided by residues 30 to 37 (GKSNVGKS), 57 to 61 (GKTRG), 75 to 78 (DLPG), 142 to 145 (TKAD), and 173 to 175 (FSA). Residues Ser-37 and Thr-59 each contribute to the Mg(2+) site.

This sequence belongs to the TRAFAC class TrmE-Era-EngA-EngB-Septin-like GTPase superfamily. EngB GTPase family. The cofactor is Mg(2+).

Functionally, necessary for normal cell division and for the maintenance of normal septation. The protein is Probable GTP-binding protein EngB of Caldanaerobacter subterraneus subsp. tengcongensis (strain DSM 15242 / JCM 11007 / NBRC 100824 / MB4) (Thermoanaerobacter tengcongensis).